Reading from the N-terminus, the 29-residue chain is Brevinin-2Ed (29 aa).

A disulfide bridge links cysteine 23 with cysteine 29.

It belongs to the frog skin active peptide (FSAP) family. Brevinin subfamily. Expressed by the skin glands.

The protein localises to the secreted. Its function is as follows. Shows antibacterial activity against representative Gram-negative and Gram-positive bacterial species, and hemolytic activity. This Pelophylax lessonae (Pool frog) protein is Brevinin-2Ed.